The sequence spans 347 residues: MEHDGTINYDVSENHGHVPVMRARMAQLLAPAIEAAGENAVIVDGTLGAGGHSEYFLTTFPSVRIIGVDRDSASLSSASRRLSPFADRFVGVNARFDEVGSAIAEGESEVFSIAREHGIAGALFDLGVSSMQLDQVDRGFAYKTDAPLDMRMDPRQGMTAADILNTYSHGDLARILKTYGDERFAGKIASAVLREREKEPFGNSARLVDLLYATIPAATRRTGGHPAKRTFQALRVEVNRELEAIEQVIPVITDALSIGGRAVFMSYQSLEDRIVKHAFTKLSTSTTPAGLPMDLPGTAAHYSVVTRGAEKASQEEIAENPRAASVRVRALERLEGTPSFHEPGGRP.

S-adenosyl-L-methionine-binding positions include 50–52 (GGH), D69, F96, D125, and Q132.

This sequence belongs to the methyltransferase superfamily. RsmH family.

It is found in the cytoplasm. It carries out the reaction cytidine(1402) in 16S rRNA + S-adenosyl-L-methionine = N(4)-methylcytidine(1402) in 16S rRNA + S-adenosyl-L-homocysteine + H(+). Functionally, specifically methylates the N4 position of cytidine in position 1402 (C1402) of 16S rRNA. The sequence is that of Ribosomal RNA small subunit methyltransferase H from Corynebacterium aurimucosum (strain ATCC 700975 / DSM 44827 / CIP 107346 / CN-1) (Corynebacterium nigricans).